Here is a 72-residue protein sequence, read N- to C-terminus: Translation initiation factor IF-1 (72 aa).

In terms of domain architecture, S1-like spans 1-72; that stretch reads MAKEDSIEMQ…TKGRIIFRAR (72 aa).

It belongs to the IF-1 family. As to quaternary structure, component of the 30S ribosomal translation pre-initiation complex which assembles on the 30S ribosome in the order IF-2 and IF-3, IF-1 and N-formylmethionyl-tRNA(fMet); mRNA recruitment can occur at any time during PIC assembly.

The protein localises to the cytoplasm. Its function is as follows. One of the essential components for the initiation of protein synthesis. Stabilizes the binding of IF-2 and IF-3 on the 30S subunit to which N-formylmethionyl-tRNA(fMet) subsequently binds. Helps modulate mRNA selection, yielding the 30S pre-initiation complex (PIC). Upon addition of the 50S ribosomal subunit IF-1, IF-2 and IF-3 are released leaving the mature 70S translation initiation complex. This chain is Translation initiation factor IF-1, found in Actinobacillus succinogenes (strain ATCC 55618 / DSM 22257 / CCUG 43843 / 130Z).